Reading from the N-terminus, the 125-residue chain is Small ribosomal subunit protein uS12 (125 aa).

Residues 1-30 (MPTISQLVRKPRAAKPLKSKVPALGNSPQK) form a disordered region. Residues 9–18 (RKPRAAKPLK) are compositionally biased toward basic residues. A 3-methylthioaspartic acid modification is found at Asp-89. A disordered region spans residues 103–125 (DTAGVKDRKQGRSKYGAKKPKSA). Basic residues predominate over residues 113 to 125 (GRSKYGAKKPKSA).

It belongs to the universal ribosomal protein uS12 family. As to quaternary structure, part of the 30S ribosomal subunit. Contacts proteins S8 and S17. May interact with IF1 in the 30S initiation complex.

Its function is as follows. With S4 and S5 plays an important role in translational accuracy. Interacts with and stabilizes bases of the 16S rRNA that are involved in tRNA selection in the A site and with the mRNA backbone. Located at the interface of the 30S and 50S subunits, it traverses the body of the 30S subunit contacting proteins on the other side and probably holding the rRNA structure together. The combined cluster of proteins S8, S12 and S17 appears to hold together the shoulder and platform of the 30S subunit. In Nitrosospira multiformis (strain ATCC 25196 / NCIMB 11849 / C 71), this protein is Small ribosomal subunit protein uS12.